Consider the following 994-residue polypeptide: Valine--tRNA ligase (994 aa).

The 'HIGH' region motif lies at 43–53 (PNVTGTLHMGH). The interval 332–356 (IASGATSDTTDTPSDSDASNASNQH) is disordered. Residues 333–353 (ASGATSDTTDTPSDSDASNAS) show a composition bias toward low complexity. Residues 585 to 589 (KMSKS) carry the 'KMSKS' region motif. K588 serves as a coordination point for ATP. The tract at residues 691–713 (TAHSPAQHQAGQDGQDVPRTPQP) is disordered. A coiled-coil region spans residues 928–994 (LIDVDAERAR…NGLRERRTTL (67 aa)).

Belongs to the class-I aminoacyl-tRNA synthetase family. ValS type 1 subfamily. In terms of assembly, monomer.

It is found in the cytoplasm. The catalysed reaction is tRNA(Val) + L-valine + ATP = L-valyl-tRNA(Val) + AMP + diphosphate. Catalyzes the attachment of valine to tRNA(Val). As ValRS can inadvertently accommodate and process structurally similar amino acids such as threonine, to avoid such errors, it has a 'posttransfer' editing activity that hydrolyzes mischarged Thr-tRNA(Val) in a tRNA-dependent manner. This is Valine--tRNA ligase from Xylella fastidiosa (strain M23).